We begin with the raw amino-acid sequence, 459 residues long: UDP-N-acetylmuramate--L-alanine ligase (459 aa).

An ATP-binding site is contributed by 118 to 124; sequence GTHGKTT.

It belongs to the MurCDEF family.

It is found in the cytoplasm. The enzyme catalyses UDP-N-acetyl-alpha-D-muramate + L-alanine + ATP = UDP-N-acetyl-alpha-D-muramoyl-L-alanine + ADP + phosphate + H(+). Its pathway is cell wall biogenesis; peptidoglycan biosynthesis. In terms of biological role, cell wall formation. In Clostridium beijerinckii (strain ATCC 51743 / NCIMB 8052) (Clostridium acetobutylicum), this protein is UDP-N-acetylmuramate--L-alanine ligase.